Reading from the N-terminus, the 147-residue chain is Deoxyuridine 5'-triphosphate nucleotidohydrolase (147 aa).

Substrate-binding positions include 67 to 69, asparagine 80, and 84 to 86; these read RSG and LID.

This sequence belongs to the dUTPase family. Mg(2+) is required as a cofactor.

It carries out the reaction dUTP + H2O = dUMP + diphosphate + H(+). It functions in the pathway pyrimidine metabolism; dUMP biosynthesis; dUMP from dCTP (dUTP route): step 2/2. Its function is as follows. This enzyme is involved in nucleotide metabolism: it produces dUMP, the immediate precursor of thymidine nucleotides and it decreases the intracellular concentration of dUTP so that uracil cannot be incorporated into DNA. The protein is Deoxyuridine 5'-triphosphate nucleotidohydrolase of Dictyoglomus turgidum (strain DSM 6724 / Z-1310).